An 848-amino-acid polypeptide reads, in one-letter code: Trimethylamine-N-oxide reductase 1 (848 aa).

A signal peptide (tat-type signal) is located at residues 1 to 39; it reads MNNNDLFQASRRRFLAQLGGLTVAGMLGPSLLTSRRATA. A Mo-bis(molybdopterin guanine dinucleotide)-binding site is contributed by S191.

This sequence belongs to the prokaryotic molybdopterin-containing oxidoreductase family. As to quaternary structure, interacts with the N-terminal domain of TorC. Mo-bis(molybdopterin guanine dinucleotide) serves as cofactor. Predicted to be exported by the Tat system. The position of the signal peptide cleavage has not been experimentally proven.

The protein localises to the periplasm. It catalyses the reaction trimethylamine + 2 Fe(III)-[cytochrome c] + H2O = trimethylamine N-oxide + 2 Fe(II)-[cytochrome c] + 3 H(+). Its function is as follows. Reduces trimethylamine-N-oxide (TMAO) into trimethylamine; an anaerobic reaction coupled to energy-yielding reactions. The chain is Trimethylamine-N-oxide reductase 1 (torA) from Escherichia coli O157:H7.